The primary structure comprises 217 residues: Ribonuclease T (217 aa).

The Exonuclease domain maps to 20 to 194 (VVIDIETAGF…YDTQQTANLF (175 aa)). 4 residues coordinate Mg(2+): Asp-23, Glu-25, His-181, and Asp-186. His-181 functions as the Proton donor/acceptor in the catalytic mechanism.

Belongs to the RNase T family. As to quaternary structure, homodimer. Mg(2+) serves as cofactor.

Trims short 3' overhangs of a variety of RNA species, leaving a one or two nucleotide 3' overhang. Responsible for the end-turnover of tRNA: specifically removes the terminal AMP residue from uncharged tRNA (tRNA-C-C-A). Also appears to be involved in tRNA biosynthesis. This chain is Ribonuclease T, found in Buchnera aphidicola subsp. Baizongia pistaciae (strain Bp).